The sequence spans 207 residues: Ribosomal RNA small subunit methyltransferase G (207 aa).

Residues Gly-73, Leu-78, 124–125 (VE), and Arg-139 each bind S-adenosyl-L-methionine.

It belongs to the methyltransferase superfamily. RNA methyltransferase RsmG family.

The protein localises to the cytoplasm. The enzyme catalyses guanosine(527) in 16S rRNA + S-adenosyl-L-methionine = N(7)-methylguanosine(527) in 16S rRNA + S-adenosyl-L-homocysteine. Its function is as follows. Specifically methylates the N7 position of guanine in position 527 of 16S rRNA. The polypeptide is Ribosomal RNA small subunit methyltransferase G (Escherichia fergusonii (strain ATCC 35469 / DSM 13698 / CCUG 18766 / IAM 14443 / JCM 21226 / LMG 7866 / NBRC 102419 / NCTC 12128 / CDC 0568-73)).